Consider the following 421-residue polypeptide: Gamma-glutamyl phosphate reductase (421 aa).

It belongs to the gamma-glutamyl phosphate reductase family.

The protein resides in the cytoplasm. It carries out the reaction L-glutamate 5-semialdehyde + phosphate + NADP(+) = L-glutamyl 5-phosphate + NADPH + H(+). The protein operates within amino-acid biosynthesis; L-proline biosynthesis; L-glutamate 5-semialdehyde from L-glutamate: step 2/2. Functionally, catalyzes the NADPH-dependent reduction of L-glutamate 5-phosphate into L-glutamate 5-semialdehyde and phosphate. The product spontaneously undergoes cyclization to form 1-pyrroline-5-carboxylate. This Roseobacter denitrificans (strain ATCC 33942 / OCh 114) (Erythrobacter sp. (strain OCh 114)) protein is Gamma-glutamyl phosphate reductase.